A 568-amino-acid polypeptide reads, in one-letter code: MAPLFILTETAAGLVLFKADKKLLKKDDVASEIETAEGINGLLKLKQFQKFDSAATALEEVASLVEGKVSPMLASLLDTLKDEKKASLAVADPKLGQAINKLPGLTLTPISDSKTNDIFRGIRDHLPSLIPGLLPEHISTMSLGLSHSLSRHKLKFSPDKVDTMIVQAISLLDDLDKELNTYAMRVKEWYGWHFPEMGKIVNDNLAYARVILKVGMRVNTSSTDLADILPEEIETAIKAAAEVSMGTEITQEDLDNIKLLAEQVVGFTEYRQQLSSYLSARMQAIAPNLTELVGDLVGARLIAHAGSLMNLAKSPASTIQILGAEKALFRALKTKHDTPKYGLIYHASLVGQATGKNKGKIARMLAAKAAIGLRVDALSDWSAQGEGKGDDVDDEERSALGVTSRAKIERHLRGLEGKPLLPRGVAVGPNGKATSAPGKWEVKEARKYNADADGLAGDEPAAAVPIREKKNKKLIEEVAEESGSDSSDDSDASEKKPKKGDKEAKKAEKAAKKAEKAAKKAAKEAKKAAKAEKEAKKSDAPEVNGSKKRKSEDDGEKSEKKKKKKSKD.

A Nop domain is found at 285 to 417 (IAPNLTELVG…IERHLRGLEG (133 aa)). Positions 451-568 (DADGLAGDEP…EKKKKKKSKD (118 aa)) are disordered. Acidic residues predominate over residues 477 to 491 (EVAEESGSDSSDDSD). A compositionally biased stretch (basic and acidic residues) spans 492 to 540 (ASEKKPKKGDKEAKKAEKAAKKAEKAAKKAAKEAKKAAKAEKEAKKSDA).

This sequence belongs to the NOP5/NOP56 family.

The protein localises to the nucleus. It is found in the nucleolus. Its function is as follows. Required for pre-18S rRNA processing. May bind microtubules. This is Nucleolar protein 58 (nop58) from Botryotinia fuckeliana (strain B05.10) (Noble rot fungus).